Consider the following 384-residue polypeptide: Shufflon-specific DNA recombinase (384 aa).

Residues 9–96 (MSLSRALDKY…LLSSLFNIAR (88 aa)) form the Core-binding (CB) domain. A Tyr recombinase domain is found at 118–284 (GRDRRLTSSE…RAWQLVSKLD (167 aa)). Catalysis depends on residues R155, K180, H235, R238, and H262. Catalysis depends on Y271, which acts as the O-(3'-phospho-DNA)-tyrosine intermediate.

Belongs to the 'phage' integrase family.

Its function is as follows. Shufflon-specific DNA recombinase. In Escherichia coli, this protein is Shufflon-specific DNA recombinase (rci).